The chain runs to 397 residues: Elongation factor Tu (397 aa).

The tr-type G domain occupies 10-206; it reads KPHVNIGTIG…AIDSYIPTPE (197 aa). A G1 region spans residues 19–26; it reads GHVDHGKT. Residue 19-26 coordinates GTP; that stretch reads GHVDHGKT. A Mg(2+)-binding site is contributed by Thr26. A G2 region spans residues 60-64; it reads GITIN. Residues 81–84 form a G3 region; sequence DCPG. Residues 81-85 and 136-139 each bind GTP; these read DCPGH and NKAD. Positions 136–139 are G4; it reads NKAD. A G5 region spans residues 174 to 176; that stretch reads SAL.

The protein belongs to the TRAFAC class translation factor GTPase superfamily. Classic translation factor GTPase family. EF-Tu/EF-1A subfamily. As to quaternary structure, monomer.

The protein localises to the cytoplasm. It carries out the reaction GTP + H2O = GDP + phosphate + H(+). Its function is as follows. GTP hydrolase that promotes the GTP-dependent binding of aminoacyl-tRNA to the A-site of ribosomes during protein biosynthesis. This chain is Elongation factor Tu, found in Clostridium botulinum (strain Loch Maree / Type A3).